A 689-amino-acid chain; its full sequence is FACT complex subunit ssrp1-B (689 aa).

Disordered stretches follow at residues 434 to 565 (DNKS…KRAT) and 592 to 689 (KAGA…GESD). Residues 461–477 (EQDDDSDDESTDEDYDL) show a composition bias toward acidic residues. Basic and acidic residues-rich tracts occupy residues 478–491 (DKDMKKQKNDKDSS), 523–532 (IEPKKKESKE), 538–563 (EKKEKPVKEKAVKKGKKTKDPNEPKR), and 601–628 (SADDKKEWNDKAAQDKARYEAEMKEYKK). Positions 561–627 (PKRATTAYII…RYEAEMKEYK (67 aa)) form a DNA-binding region, HMG box. Residues 638–650 (GPSTKKSSDQSPG) are compositionally biased toward polar residues.

This sequence belongs to the SSRP1 family. In terms of assembly, component of the FACT complex, a stable heterodimer of hmg-3 and spt-16. The FACT complex may also include hmg-4 instead of hmg-3. In terms of tissue distribution, expressed in the germline.

It localises to the nucleus. It is found in the chromosome. Its function is as follows. Component of the FACT complex, a general chromatin factor that acts to reorganize nucleosomes. The FACT complex is involved in multiple processes that require DNA as a template such as mRNA elongation, DNA replication and DNA repair. During transcription elongation the FACT complex acts as a histone chaperone that both destabilizes and restores nucleosomal structure. It facilitates the passage of RNA polymerase II and transcription by promoting the dissociation of one histone H2A-H2B dimer from the nucleosome, then subsequently promotes the reestablishment of the nucleosome following the passage of RNA polymerase II. Binds specifically to double-stranded DNA. In embryos, may function redundantly with hmg-4 to promote cell cycle progression and development of the anterior pharynx. In the germline, acts non-redundantly with hmg-4 to play a role in oocyte development. The polypeptide is FACT complex subunit ssrp1-B (Caenorhabditis elegans).